We begin with the raw amino-acid sequence, 198 residues long: Ribosome maturation factor RimP (198 aa).

Belongs to the RimP family.

It is found in the cytoplasm. Its function is as follows. Required for maturation of 30S ribosomal subunits. The polypeptide is Ribosome maturation factor RimP (Rhizobium rhizogenes (strain K84 / ATCC BAA-868) (Agrobacterium radiobacter)).